The chain runs to 390 residues: Phosphopentomutase (390 aa).

Mn(2+)-binding residues include Asp-10, Asp-284, His-289, Asp-325, His-326, and His-337.

It belongs to the phosphopentomutase family. Requires Mn(2+) as cofactor.

It is found in the cytoplasm. The catalysed reaction is 2-deoxy-alpha-D-ribose 1-phosphate = 2-deoxy-D-ribose 5-phosphate. It carries out the reaction alpha-D-ribose 1-phosphate = D-ribose 5-phosphate. It functions in the pathway carbohydrate degradation; 2-deoxy-D-ribose 1-phosphate degradation; D-glyceraldehyde 3-phosphate and acetaldehyde from 2-deoxy-alpha-D-ribose 1-phosphate: step 1/2. Its function is as follows. Isomerase that catalyzes the conversion of deoxy-ribose 1-phosphate (dRib-1-P) and ribose 1-phosphate (Rib-1-P) to deoxy-ribose 5-phosphate (dRib-5-P) and ribose 5-phosphate (Rib-5-P), respectively. This Clostridioides difficile (strain 630) (Peptoclostridium difficile) protein is Phosphopentomutase.